The chain runs to 73 residues: Large ribosomal subunit protein bL31 (73 aa).

Cysteine 16, cysteine 18, cysteine 38, and cysteine 41 together coordinate Zn(2+).

It belongs to the bacterial ribosomal protein bL31 family. Type A subfamily. Part of the 50S ribosomal subunit. It depends on Zn(2+) as a cofactor.

Its function is as follows. Binds the 23S rRNA. The protein is Large ribosomal subunit protein bL31 of Vibrio vulnificus (strain CMCP6).